A 421-amino-acid chain; its full sequence is Serine hydroxymethyltransferase (421 aa).

Residues leucine 121 and 125-127 (GHL) contribute to the (6S)-5,6,7,8-tetrahydrofolate site. Residue lysine 229 is modified to N6-(pyridoxal phosphate)lysine.

Belongs to the SHMT family. In terms of assembly, homodimer. Requires pyridoxal 5'-phosphate as cofactor.

Its subcellular location is the cytoplasm. It carries out the reaction (6R)-5,10-methylene-5,6,7,8-tetrahydrofolate + glycine + H2O = (6S)-5,6,7,8-tetrahydrofolate + L-serine. It functions in the pathway one-carbon metabolism; tetrahydrofolate interconversion. Its pathway is amino-acid biosynthesis; glycine biosynthesis; glycine from L-serine: step 1/1. In terms of biological role, catalyzes the reversible interconversion of serine and glycine with tetrahydrofolate (THF) serving as the one-carbon carrier. This reaction serves as the major source of one-carbon groups required for the biosynthesis of purines, thymidylate, methionine, and other important biomolecules. Also exhibits THF-independent aldolase activity toward beta-hydroxyamino acids, producing glycine and aldehydes, via a retro-aldol mechanism. This chain is Serine hydroxymethyltransferase, found in Haemophilus influenzae (strain PittEE).